The following is a 76-amino-acid chain: Conotoxin Cl6.4 (76 aa).

Residues 1–19 (MTLTFLLVVALCMLTTCHT) form the signal peptide. A propeptide spanning residues 20–47 (ENYRDSQKVSPVRSIGKTQFARSLRLSE) is cleaved from the precursor. Intrachain disulfides connect cysteine 50–cysteine 66, cysteine 57–cysteine 70, and cysteine 65–cysteine 75.

In terms of tissue distribution, expressed by the venom duct.

The protein resides in the secreted. In Californiconus californicus (California cone), this protein is Conotoxin Cl6.4.